The following is a 56-amino-acid chain: Small ribosomal subunit protein uS14 (56 aa).

The Zn(2+) site is built by cysteine 21, cysteine 24, cysteine 39, and cysteine 42.

The protein belongs to the universal ribosomal protein uS14 family. Component of the 40S small ribosomal subunit. The cofactor is Zn(2+).

The protein resides in the cytoplasm. It localises to the cytosol. It is found in the rough endoplasmic reticulum. In Ixodes scapularis (Black-legged tick), this protein is Small ribosomal subunit protein uS14 (RpS29).